Consider the following 66-residue polypeptide: Potassium channel toxin alpha-KTx 30.3 (66 aa).

Residues 1 to 24 form the signal peptide; it reads MNKTFFLVVIMATVLVLAFDATDA. 3 disulfides stabilise this stretch: cysteine 30/cysteine 50, cysteine 36/cysteine 55, and cysteine 40/cysteine 57.

It belongs to the short scorpion toxin superfamily. Potassium channel inhibitor family. Alpha-KTx 30 subfamily. Expressed by the venom gland.

It localises to the secreted. Its function is as follows. inhibits Kv1.3/KCNA3 channel. In Scorpiops jendeki (Scorpion), this protein is Potassium channel toxin alpha-KTx 30.3.